The following is a 156-amino-acid chain: Transcription antitermination protein NusB (156 aa).

It belongs to the NusB family.

Its function is as follows. Involved in transcription antitermination. Required for transcription of ribosomal RNA (rRNA) genes. Binds specifically to the boxA antiterminator sequence of the ribosomal RNA (rrn) operons. The sequence is that of Transcription antitermination protein NusB from Vibrio cholerae serotype O1 (strain ATCC 39541 / Classical Ogawa 395 / O395).